The following is a 130-amino-acid chain: Protein ApaG (130 aa).

Residues 3–127 (RAVTRRIEVT…FSLDSPEGKR (125 aa)) form the ApaG domain.

In Rhodopseudomonas palustris (strain ATCC BAA-98 / CGA009), this protein is Protein ApaG.